The chain runs to 416 residues: CinA-like protein (416 aa).

It belongs to the CinA family.

In Solibacter usitatus (strain Ellin6076), this protein is CinA-like protein.